We begin with the raw amino-acid sequence, 157 residues long: Large ribosomal subunit protein uL15 (157 aa).

The segment at 1–40 (MKLHELSDNPGATKKRMRIGRGPGSGKGKMGGRGIKGQKS) is disordered. The segment covering 21-35 (RGPGSGKGKMGGRGI) has biased composition (gly residues).

This sequence belongs to the universal ribosomal protein uL15 family. In terms of assembly, part of the 50S ribosomal subunit.

In terms of biological role, binds to the 23S rRNA. This is Large ribosomal subunit protein uL15 from Ruegeria pomeroyi (strain ATCC 700808 / DSM 15171 / DSS-3) (Silicibacter pomeroyi).